The sequence spans 167 residues: 2-C-methyl-D-erythritol 2,4-cyclodiphosphate synthase (167 aa).

A divalent metal cation is bound by residues Asp-8 and His-10. Residues 8–10 (DIH) and 34–35 (HS) each bind 4-CDP-2-C-methyl-D-erythritol 2-phosphate. His-42 is an a divalent metal cation binding site. 4-CDP-2-C-methyl-D-erythritol 2-phosphate is bound by residues 56–58 (DIG) and Arg-142.

The protein belongs to the IspF family. Homotrimer. Requires a divalent metal cation as cofactor.

It carries out the reaction 4-CDP-2-C-methyl-D-erythritol 2-phosphate = 2-C-methyl-D-erythritol 2,4-cyclic diphosphate + CMP. Its pathway is isoprenoid biosynthesis; isopentenyl diphosphate biosynthesis via DXP pathway; isopentenyl diphosphate from 1-deoxy-D-xylulose 5-phosphate: step 4/6. Functionally, involved in the biosynthesis of isopentenyl diphosphate (IPP) and dimethylallyl diphosphate (DMAPP), two major building blocks of isoprenoid compounds. Catalyzes the conversion of 4-diphosphocytidyl-2-C-methyl-D-erythritol 2-phosphate (CDP-ME2P) to 2-C-methyl-D-erythritol 2,4-cyclodiphosphate (ME-CPP) with a corresponding release of cytidine 5-monophosphate (CMP). The sequence is that of 2-C-methyl-D-erythritol 2,4-cyclodiphosphate synthase from Buchnera aphidicola subsp. Schizaphis graminum (strain Sg).